The primary structure comprises 592 residues: Probable auxin efflux carrier component 1c (592 aa).

Topologically, residues 1 to 6 (MITGAD) are extracellular. A helical membrane pass occupies residues 7 to 27 (FYHVMTAMVPLYVAMILAYGS). Topologically, residues 28–38 (VKWWRIFTPDQ) are cytoplasmic. The chain crosses the membrane as a helical span at residues 39–59 (CSGINRFVALFAVPLLSFHFI). Position 51 (Val-51) interacts with (indol-3-yl)acetate. The Extracellular segment spans residues 60 to 70 (STNNPYTMNLR). The helical transmembrane segment at 71–91 (FIAADTLQKLIVLALLTLWSH) threads the bilayer. At 92–100 (LSRRGSLEW) the chain is on the cytoplasmic side. A helical transmembrane segment spans residues 101-121 (TITLFSLSTLPNTLVMGIPLL). 2 residues coordinate (indol-3-yl)acetate: Asn-112 and Leu-114. The Extracellular portion of the chain corresponds to 122–131 (KGMYGEFSGS). Residues 132–152 (LMVQIVVLQCIIWYTLMLFMF) form a helical membrane-spanning segment. A (indol-3-yl)acetate-binding site is contributed by Tyr-145. At 153 to 452 (EYRGARILIT…LIRNPNTYSS (300 aa)) the chain is on the cytoplasmic side. 2 disordered regions span residues 214–236 (RSDV…SNLT) and 282–331 (GATP…AKGE). The segment covering 224 to 236 (GFSSTTPRPSNLT) has biased composition (polar residues). The span at 309–318 (APNPAMAAPP) shows a compositional bias: pro residues. Residues 453-473 (LIGLIWSLVCFRWNFEMPAII) form a helical membrane-spanning segment. The Extracellular segment spans residues 474-476 (LKS). A helical transmembrane segment spans residues 477–497 (ISILSDAGLGMAMFSLGLFMA). The Cytoplasmic portion of the chain corresponds to 498–511 (LQPRIIACGNKVAT). A helical membrane pass occupies residues 512–532 (FAMAVRFLTGPAVMAAASIAV). At 533 to 537 (GLRGT) the chain is on the extracellular side. Residues 538 to 558 (LLHVAIVQAALPQGIVPFVFA) form a helical membrane-spanning segment. (indol-3-yl)acetate is bound by residues Ile-552 and Val-553. The Cytoplasmic portion of the chain corresponds to 559-571 (KEYSVHPDILSTA). Residues 572-592 (VIFGMLIALPITLVYYILLGL) form a helical membrane-spanning segment.

The protein belongs to the auxin efflux carrier (TC 2.A.69.1) family. In terms of assembly, homodimer. In terms of tissue distribution, expressed at low levels in roots and leaves. Expressed in roots, stem bases, stems, leaves and young panicles.

Its subcellular location is the membrane. Its function is as follows. May act as a component of the auxin efflux carrier. This is Probable auxin efflux carrier component 1c from Oryza sativa subsp. japonica (Rice).